The following is a 179-amino-acid chain: MSSRILTSHFSGLEEFLQQHAALLAKSTDGTVAVFANNAPAFYALTPARLAQLLELEARLARPGSDIALDPQFFEEPAAAPVAVPMGKFAMYAGWQPDADFQRLAALWGIALSQPVTPEELAAFVAYWQAEGKVFHHVQWQQKLARSVQISRASNGGQPKRDVNSVSEPDSHIPRGFRG.

The interval 1-83 is required for trimerization and to bind PriB; it reads MSSRILTSHF…FEEPAAAPVA (83 aa). Residues 84–179 are binds ssDNA; the sequence is VPMGKFAMYA…DSHIPRGFRG (96 aa). The tract at residues 151 to 179 is disordered; it reads SRASNGGQPKRDVNSVSEPDSHIPRGFRG. A compositionally biased stretch (basic and acidic residues) spans 159–173; the sequence is PKRDVNSVSEPDSHI.

The protein belongs to the DnaT family. In terms of assembly, homotrimer. Interacts with PriB. Interacts with PriC. Component of the replication restart primosome. Primosome assembly occurs via a 'hand-off' mechanism. PriA binds to replication forks, subsequently PriB then DnaT bind; DnaT then displaces ssDNA to generate the helicase loading substrate.

In terms of biological role, involved in the restart of stalled replication forks, which reloads the replicative helicase on sites other than the origin of replication. Can function in multiple replication restart pathways. Displaces ssDNA from a PriB-ssDNA complex. Probably forms a spiral filament on ssDNA. Its function is as follows. Binds single-stranded (ss)DNA. The minimal binding site is about 26 +/- 2 nucleotides (nt) per trimer. Two DNA-protein complexes are seen with 55 nt-long ssDNA. The sequence is that of Replication restart protein DnaT from Klebsiella pneumoniae subsp. pneumoniae (strain ATCC 700721 / MGH 78578).